The following is a 375-amino-acid chain: Anhydro-N-acetylmuramic acid kinase (375 aa).

18 to 25 (GTSMDGID) is an ATP binding site.

It belongs to the anhydro-N-acetylmuramic acid kinase family.

The enzyme catalyses 1,6-anhydro-N-acetyl-beta-muramate + ATP + H2O = N-acetyl-D-muramate 6-phosphate + ADP + H(+). It functions in the pathway amino-sugar metabolism; 1,6-anhydro-N-acetylmuramate degradation. Its pathway is cell wall biogenesis; peptidoglycan recycling. In terms of biological role, catalyzes the specific phosphorylation of 1,6-anhydro-N-acetylmuramic acid (anhMurNAc) with the simultaneous cleavage of the 1,6-anhydro ring, generating MurNAc-6-P. Is required for the utilization of anhMurNAc either imported from the medium or derived from its own cell wall murein, and thus plays a role in cell wall recycling. The polypeptide is Anhydro-N-acetylmuramic acid kinase (Rhodospirillum rubrum (strain ATCC 11170 / ATH 1.1.1 / DSM 467 / LMG 4362 / NCIMB 8255 / S1)).